Here is a 490-residue protein sequence, read N- to C-terminus: Betaine aldehyde dehydrogenase (490 aa).

Positions 26, 27, and 93 each coordinate K(+). 150-152 (GAW) contacts NAD(+). Lysine 162 acts as the Charge relay system in catalysis. An NAD(+)-binding site is contributed by 176–179 (KPSE). Valine 180 contacts K(+). Residue 230–233 (GTVT) participates in NAD(+) binding. A K(+)-binding site is contributed by leucine 246. Glutamate 252 functions as the Proton acceptor in the catalytic mechanism. Positions 254, 286, and 387 each coordinate NAD(+). Cysteine 286 serves as the catalytic Nucleophile. Residue cysteine 286 is modified to Cysteine sulfenic acid (-SOH). Lysine 457 and glycine 460 together coordinate K(+). The Charge relay system role is filled by glutamate 464.

Belongs to the aldehyde dehydrogenase family. Dimer of dimers. Requires K(+) as cofactor.

The catalysed reaction is betaine aldehyde + NAD(+) + H2O = glycine betaine + NADH + 2 H(+). It functions in the pathway amine and polyamine biosynthesis; betaine biosynthesis via choline pathway; betaine from betaine aldehyde: step 1/1. Its function is as follows. Involved in the biosynthesis of the osmoprotectant glycine betaine. Catalyzes the irreversible oxidation of betaine aldehyde to the corresponding acid. The chain is Betaine aldehyde dehydrogenase from Ectopseudomonas mendocina (strain ymp) (Pseudomonas mendocina).